Consider the following 464-residue polypeptide: Glycine receptor subunit alpha-3 (464 aa).

The first 33 residues, 1 to 33, serve as a signal peptide directing secretion; it reads MAHVRHFRTLVSGFYFWEAALLLSLVATKETDS. Topologically, residues 34–255 are extracellular; it reads ARSRSAPMSP…RFHLERQMGY (222 aa). The N-linked (GlcNAc...) asparagine glycan is linked to asparagine 71. A disulfide bond links cysteine 171 and cysteine 185. Glutamate 225 and aspartate 227 together coordinate Zn(2+). Cysteine 231 and cysteine 242 are oxidised to a cystine. Residue 235-240 participates in strychnine binding; the sequence is YNTGKF. Residue histidine 248 coordinates Zn(2+). Residues 256–277 form a helical membrane-spanning segment; it reads YLIQMYIPSLLIVILSWVSFWI. Over 278 to 282 the chain is Cytoplasmic; the sequence is NMDAA. Residues 283-303 traverse the membrane as a helical segment; the sequence is PARVALGITTVLTMTTQSSGS. The Extracellular segment spans residues 304 to 314; the sequence is RASLPKVSYVK. The helical transmembrane segment at 315-335 threads the bilayer; the sequence is AIDIWMAVCLLFVFSALLEYA. The Cytoplasmic portion of the chain corresponds to 336-430; the sequence is AVNFVSRQHK…FIDRAKKIDT (95 aa). A phosphoserine mark is found at serine 370 and serine 379. Residues 431 to 451 traverse the membrane as a helical segment; it reads ISRACFPLAFLIFNIFYWVIY. The Extracellular portion of the chain corresponds to 452 to 464; sequence KILRHEDIHQQQD.

It belongs to the ligand-gated ion channel (TC 1.A.9) family. Glycine receptor (TC 1.A.9.3) subfamily. GLRA3 sub-subfamily. Homopentamer (in vitro). Heteropentamer composed of GLRA3 and GLRB. Both homopentamers and heteropentamers form functional ion channels, but their characteristics are subtly different. In terms of processing, phosphorylated by PKA; this causes down-regulation of channel activity. In terms of tissue distribution, widely distributed throughout the central nervous system.

It localises to the postsynaptic cell membrane. Its subcellular location is the perikaryon. The protein resides in the cell projection. It is found in the dendrite. The protein localises to the synapse. It localises to the cell membrane. It catalyses the reaction chloride(in) = chloride(out). In terms of biological role, glycine receptors are ligand-gated chloride channels. Channel opening is triggered by extracellular glycine. Channel characteristics depend on the subunit composition; heteropentameric channels display faster channel closure. Plays an important role in the down-regulation of neuronal excitability. Contributes to the generation of inhibitory postsynaptic currents. Contributes to increased pain perception in response to increased prostaglandin E2 levels. Plays a role in cellular responses to ethanol. The sequence is that of Glycine receptor subunit alpha-3 (GLRA3) from Homo sapiens (Human).